We begin with the raw amino-acid sequence, 216 residues long: Fibroblast growth factor 17 (216 aa).

The signal sequence occupies residues 1-22 (MGAARLLPNLTLCLQLLILCCQ). N-linked (GlcNAc...) asparagine glycosylation occurs at Asn-137. A disordered region spans residues 190–216 (EKQKQFEFVGSAPTRRTKRTRRPQPLT). Positions 204–216 (RRTKRTRRPQPLT) are enriched in basic residues.

Belongs to the heparin-binding growth factors family. In terms of assembly, interacts with FGFR3 and FGFR4. As to expression, preferentially expressed in the embryonic brain.

It localises to the secreted. Plays an important role in the regulation of embryonic development and as signaling molecule in the induction and patterning of the embryonic brain. Required for normal brain development. The protein is Fibroblast growth factor 17 (FGF17) of Homo sapiens (Human).